We begin with the raw amino-acid sequence, 371 residues long: Opine oxidase subunit B (371 aa).

Heterodimer of a subunit A and a subunit B.

It participates in opine metabolism; octopine degradation. Oxidative cleavage of octopine into L-arginine and pyruvate. This Rhizobium meliloti (Ensifer meliloti) protein is Opine oxidase subunit B (ooxB).